Consider the following 156-residue polypeptide: Small ribosomal subunit protein uS7 (156 aa).

This sequence belongs to the universal ribosomal protein uS7 family. In terms of assembly, part of the 30S ribosomal subunit. Contacts proteins S9 and S11.

Functionally, one of the primary rRNA binding proteins, it binds directly to 16S rRNA where it nucleates assembly of the head domain of the 30S subunit. Is located at the subunit interface close to the decoding center, probably blocks exit of the E-site tRNA. This is Small ribosomal subunit protein uS7 from Acinetobacter baylyi (strain ATCC 33305 / BD413 / ADP1).